The primary structure comprises 397 residues: Acetate kinase (397 aa).

Asn8 contacts Mg(2+). Lys15 provides a ligand contact to ATP. Arg92 provides a ligand contact to substrate. Asp149 serves as the catalytic Proton donor/acceptor. Residues 209–213 (HLGNG), 283–285 (DFR), and 331–335 (GVGEN) contribute to the ATP site. Glu385 contacts Mg(2+).

The protein belongs to the acetokinase family. As to quaternary structure, homodimer. Requires Mg(2+) as cofactor. It depends on Mn(2+) as a cofactor.

Its subcellular location is the cytoplasm. It carries out the reaction acetate + ATP = acetyl phosphate + ADP. It participates in metabolic intermediate biosynthesis; acetyl-CoA biosynthesis; acetyl-CoA from acetate: step 1/2. Catalyzes the formation of acetyl phosphate from acetate and ATP. Can also catalyze the reverse reaction. This is Acetate kinase from Corynebacterium glutamicum (strain ATCC 13032 / DSM 20300 / JCM 1318 / BCRC 11384 / CCUG 27702 / LMG 3730 / NBRC 12168 / NCIMB 10025 / NRRL B-2784 / 534).